Reading from the N-terminus, the 209-residue chain is Ribosomal RNA large subunit methyltransferase E (209 aa).

Residues glycine 63, tryptophan 65, aspartate 83, aspartate 99, and aspartate 124 each contribute to the S-adenosyl-L-methionine site. Residue lysine 164 is the Proton acceptor of the active site.

It belongs to the class I-like SAM-binding methyltransferase superfamily. RNA methyltransferase RlmE family.

The protein resides in the cytoplasm. The enzyme catalyses uridine(2552) in 23S rRNA + S-adenosyl-L-methionine = 2'-O-methyluridine(2552) in 23S rRNA + S-adenosyl-L-homocysteine + H(+). Its function is as follows. Specifically methylates the uridine in position 2552 of 23S rRNA at the 2'-O position of the ribose in the fully assembled 50S ribosomal subunit. The sequence is that of Ribosomal RNA large subunit methyltransferase E from Shewanella putrefaciens (strain CN-32 / ATCC BAA-453).